Here is a 191-residue protein sequence, read N- to C-terminus: Phosphoheptose isomerase (191 aa).

In terms of domain architecture, SIS spans 37–191; that stretch reads IADSFKQDGK…IIQLIEKEME (155 aa). 52–54 lines the substrate pocket; sequence NGG. Histidine 61 and glutamate 65 together coordinate Zn(2+). Substrate-binding positions include glutamate 65, 93–94, 119–121, serine 124, and glutamine 172; these read ND and STS. Positions 172 and 180 each coordinate Zn(2+).

The protein belongs to the SIS family. GmhA subfamily. As to quaternary structure, homotetramer. Requires Zn(2+) as cofactor.

It is found in the cytoplasm. It catalyses the reaction 2 D-sedoheptulose 7-phosphate = D-glycero-alpha-D-manno-heptose 7-phosphate + D-glycero-beta-D-manno-heptose 7-phosphate. It participates in carbohydrate biosynthesis; D-glycero-D-manno-heptose 7-phosphate biosynthesis; D-glycero-alpha-D-manno-heptose 7-phosphate and D-glycero-beta-D-manno-heptose 7-phosphate from sedoheptulose 7-phosphate: step 1/1. Its pathway is bacterial outer membrane biogenesis; LPS core biosynthesis. Its function is as follows. Catalyzes the isomerization of sedoheptulose 7-phosphate in D-glycero-D-manno-heptose 7-phosphate. In Vibrio parahaemolyticus serotype O3:K6 (strain RIMD 2210633), this protein is Phosphoheptose isomerase.